The chain runs to 428 residues: Probable RNase MJ4 (428 aa).

Zn(2+)-binding residues include histidine 57, histidine 59, aspartate 61, histidine 62, histidine 143, aspartate 165, and histidine 397.

The protein belongs to the metallo-beta-lactamase superfamily. RNA-metabolizing metallo-beta-lactamase-like family. Requires Zn(2+) as cofactor.

In terms of biological role, probably an RNase. This is Probable RNase MJ4 from Methanocaldococcus jannaschii (strain ATCC 43067 / DSM 2661 / JAL-1 / JCM 10045 / NBRC 100440) (Methanococcus jannaschii).